We begin with the raw amino-acid sequence, 3434 residues long: Genome polyprotein (3434 aa).

The Cytoplasmic segment spans residues 1 to 106; it reads MSKKPGGPGR…NRGTKKKRGN (106 aa). The segment at 2 to 15 is interaction with host EXOC1; it reads SKKPGGPGRNRAIN. The segment at 37–72 is hydrophobic; homodimerization of capsid protein C; it reads LLDGRGPVRFVLALMTFFKFTALAPTKALLGRWKRI. The propeptide at 105-126 is ER anchor for the capsid protein C, removed in mature form by serine protease NS3; sequence GNNGPGLVMIITLMTVVSMVSS. The helical transmembrane segment at 107 to 126 threads the bilayer; it reads NGPGLVMIITLMTVVSMVSS. Topologically, residues 127 to 248 are extracellular; sequence LKLSNFQGKV…DSTKASRYLM (122 aa). The N-linked (GlcNAc...) asparagine; by host glycan is linked to N141. A helical membrane pass occupies residues 249–273; sequence KTENWIIRNPGYAFVAVLLGWMLGS. Residues 274-278 lie on the Cytoplasmic side of the membrane; the sequence is NNGQR. A helical membrane pass occupies residues 279–293; sequence VVFVVLLLLVAPAYS. Over 294–745 the chain is Extracellular; it reads FNCLGMSNRD…QVFGGAFRTL (452 aa). Disulfide bonds link C296/C323, C353/C409, C353/C414, C367/C398, C385/C409, C385/C414, C483/C580, and C597/C628. Residues 391–404 form a fusion peptide region; sequence DRGWGNGCGLFGKG. Residues 746-766 traverse the membrane as a helical segment; the sequence is FGGMSWITQGLMGALLLWMGV. The Cytoplasmic segment spans residues 767–772; the sequence is NARDRS. Residues 773–793 form a helical membrane-spanning segment; the sequence is IALVMLATGGVLLFLATNVHA. At 794 to 1218 the chain is on the extracellular side; the sequence is DSGCAIDVGR…AFAEANSGGD (425 aa). 2 cysteine pairs are disulfide-bonded: C797/C808 and C848/C936. 3 N-linked (GlcNAc...) asparagine; by host glycosylation sites follow: N923, N968, and N1000. Intrachain disulfides connect C972/C1016, C1073/C1122, C1084/C1105, C1084/C1106, C1105/C1109, and C1106/C1109. A helical membrane pass occupies residues 1219-1239; sequence VVHLALIAAFKIQPGFLAMTF. Residues 1240-1249 are Cytoplasmic-facing; the sequence is LRGKWTNQEN. Residues 1250-1270 traverse the membrane as a helical segment; it reads ILLALGAAFFQMAATDLNFSL. At 1271–1286 the chain is on the lumenal side; that stretch reads PGILNATATAWMLLRA. Residues 1287 to 1307 form a helical membrane-spanning segment; it reads ATQPSTSAIVMPLLCLLAPGM. R1308 is a topological domain (cytoplasmic). The chain crosses the membrane as a helical span at residues 1309-1329; the sequence is LLYLDTYRITLIIIGICSLIG. The Lumenal portion of the chain corresponds to 1330–1340; sequence ERRRAAAKKKG. A helical transmembrane segment spans residues 1341–1361; it reads AVLLGLALTSTGQFSASVMAA. Residues 1362-1373 are Cytoplasmic-facing; it reads GLMACNPNKKRG. The chain crosses the membrane as a helical span at residues 1374 to 1394; sequence WPATEVLTAVGLMFAIVGGLA. Residues 1395 to 1397 lie on the Lumenal side of the membrane; that stretch reads ELD. A helical membrane pass occupies residues 1398 to 1418; sequence VDSMSIPFVLAGLMAVSYTIS. Residues 1419–1475 are Cytoplasmic-facing; it reads GKSTDLWLERAADITWETDAAITGTSQRLDVKLDDDGDFHLINDPGVPWKIWVIRMT. The segment at 1426–1465 is interacts with and activates NS3 protease; sequence LERAADITWETDAAITGTSQRLDVKLDDDGDFHLINDPGV. An intramembrane region (helical) is located at residues 1476-1496; the sequence is ALGFAAWTPWAIIPAGIGYWL. Topologically, residues 1497–2173 are cytoplasmic; it reads TVKYAKRGGV…MALEELPDAL (677 aa). Positions 1504–1681 constitute a Peptidase S7 domain; the sequence is GGVFWDTPAP…EREEEPVPEA (178 aa). Catalysis depends on charge relay system; for serine protease NS3 activity residues H1554, D1578, and S1638. Residues 1684–1840 enclose the Helicase ATP-binding domain; sequence ADMLRKKQLT…DTNAPVTDIQ (157 aa). The tract at residues 1688–1691 is important for RNA-binding; the sequence is RKKQ. ATP is bound at residue 1697-1704; the sequence is LHPGAGKT. The DEAH box motif lies at 1788-1791; that stretch reads DEAH. The region spanning 1851-2016 is the Helicase C-terminal domain; it reads GFEWITEYTG…GLVAQMYGPE (166 aa). K1892 is subject to N6-acetyllysine; by host. The disordered stretch occupies residues 1956–1980; it reads ASAAQRRGRVGRNPSQIGDEYHYGG. The segment at 2167 to 2171 is regulates the ATPase activity of NS3 helicase; it reads EELPD. The helical transmembrane segment at 2174–2194 threads the bilayer; that stretch reads ETITLIVALAVMTAGVFLLLV. Residues 2195–2198 are Lumenal-facing; it reads QRRG. The helical intramembrane region spans 2199-2219; sequence IGKLGLGGMVLGLATFFLWMA. Position 2220 (D2220) is a topological domain, lumenal. A helical membrane pass occupies residues 2221-2241; that stretch reads VSGTKIAGTLLLALLMMIVLI. Topologically, residues 2242–2256 are cytoplasmic; the sequence is PEPEKQRSQTDNQLA. A helical transmembrane segment spans residues 2257–2277; that stretch reads VFLICVLLVVGVVAANEYGML. Residues 2278-2313 lie on the Lumenal side of the membrane; the sequence is ERTKSDLGKIFSSTRQPQSALPLPSMNALALDLRPA. Residues 2314–2334 constitute an intramembrane region (helical); that stretch reads TAWALYGGSTVVLTPLIKHLV. Topologically, residues 2335–2368 are lumenal; the sequence is TSEYITTSLASISAQAGSLFNLPRGLPFTELDFT. The chain crosses the membrane as a helical span at residues 2369-2389; it reads VVLVFLGCWGQVSLTTLITAA. Residues 2390–2446 are Cytoplasmic-facing; sequence ALATLHYGYMLPGWQAEALRAAQRRTAAGIMKNAVVDGLVATDVPELERTTPLMQKK. The helical transmembrane segment at 2447 to 2467 threads the bilayer; the sequence is VGQILLIGVSAAALLVNPCVT. Over 2468-2471 the chain is Lumenal; it reads TVRE. The helical transmembrane segment at 2472–2492 threads the bilayer; that stretch reads AGILISAALLTLWDNGAIAVW. The Cytoplasmic portion of the chain corresponds to 2493 to 3434; sequence NSTTATGLCH…EVNVQEDRVL (942 aa). The mRNA cap 0-1 NS5-type MT domain maps to 2530 to 2795; the sequence is GRPGGRTLGE…DVNLGSGTRA (266 aa). A disordered region spans residues 2567–2587; it reads SAARKARRDGNKTGGHPVSRG. S2585 contributes to the S-adenosyl-L-methionine binding site. Position 2585 is a phosphoserine (S2585). The For 2'-O-MTase activity role is filled by K2590. Residues G2615, W2616, T2633, K2634, D2660, and V2661 each coordinate S-adenosyl-L-methionine. Residue D2675 is the For 2'-O-MTase activity of the active site. Position 2676 (I2676) interacts with S-adenosyl-L-methionine. Catalysis depends on for 2'-O-MTase activity residues K2711 and E2747. Y2749 lines the S-adenosyl-L-methionine pocket. Zn(2+) contacts are provided by E2969, H2973, C2978, and C2981. The RdRp catalytic domain occupies 3059 to 3211; it reads GKMYADDTAG…KPLDDRFANA (153 aa). Zn(2+)-binding residues include H3246, C3262, and C3381.

In the N-terminal section; belongs to the class I-like SAM-binding methyltransferase superfamily. mRNA cap 0-1 NS5-type methyltransferase family. Homodimer. Interacts (via N-terminus) with host EXOC1 (via C-terminus); this interaction results in EXOC1 degradation through the proteasome degradation pathway. As to quaternary structure, forms heterodimers with envelope protein E in the endoplasmic reticulum and Golgi. In terms of assembly, homodimer; in the endoplasmic reticulum and Golgi. Interacts with protein prM. Interacts with non-structural protein 1. Homodimer; Homohexamer when secreted. Interacts with envelope protein E. NS1 interacts with NS4B. Interacts with host complement protein CFH; this interaction leads to the degradation of C3. As to quaternary structure, interacts (via N-terminus) with serine protease NS3. In terms of assembly, forms a heterodimer with serine protease NS3. May form homooligomers. Forms a heterodimer with NS2B. Interacts with non-structural protein 2A (via N-terminus). Interacts with NS4B. Interacts with unphosphorylated RNA-directed RNA polymerase NS5; this interaction stimulates RNA-directed RNA polymerase NS5 guanylyltransferase activity. As to quaternary structure, interacts with serine protease NS3. In terms of assembly, homodimer. Interacts with host STAT2; this interaction inhibits the phosphorylation of the latter, and, when all viral proteins are present (polyprotein), targets STAT2 for degradation. Interacts with serine protease NS3. Post-translationally, specific enzymatic cleavages in vivo yield mature proteins. Cleavages in the lumen of endoplasmic reticulum are performed by host signal peptidase, whereas cleavages in the cytoplasmic side are performed by serine protease NS3. Signal cleavage at the 2K-4B site requires a prior NS3 protease-mediated cleavage at the 4A-2K site. In terms of processing, cleaved in post-Golgi vesicles by a host furin, releasing the mature small envelope protein M, and peptide pr. This cleavage is incomplete as up to 30% of viral particles still carry uncleaved prM. N-glycosylated. Post-translationally, N-glycosylated. The excreted form is glycosylated and this is required for efficient secretion of the protein from infected cells. In terms of processing, acetylated by host KAT5. Acetylation modulates NS3 RNA-binding and unwinding activities and plays an important positive role for viral replication. Phosphorylated on serines residues. This phosphorylation may trigger NS5 nuclear localization.

Its subcellular location is the virion. The protein localises to the host nucleus. It is found in the host cytoplasm. The protein resides in the host perinuclear region. It localises to the secreted. Its subcellular location is the virion membrane. The protein localises to the host endoplasmic reticulum membrane. The enzyme catalyses Selective hydrolysis of -Xaa-Xaa-|-Yaa- bonds in which each of the Xaa can be either Arg or Lys and Yaa can be either Ser or Ala.. It carries out the reaction RNA(n) + a ribonucleoside 5'-triphosphate = RNA(n+1) + diphosphate. The catalysed reaction is a ribonucleoside 5'-triphosphate + H2O = a ribonucleoside 5'-diphosphate + phosphate + H(+). It catalyses the reaction ATP + H2O = ADP + phosphate + H(+). The enzyme catalyses a 5'-end (5'-triphosphoguanosine)-ribonucleoside in mRNA + S-adenosyl-L-methionine = a 5'-end (N(7)-methyl 5'-triphosphoguanosine)-ribonucleoside in mRNA + S-adenosyl-L-homocysteine. It carries out the reaction a 5'-end (N(7)-methyl 5'-triphosphoguanosine)-ribonucleoside in mRNA + S-adenosyl-L-methionine = a 5'-end (N(7)-methyl 5'-triphosphoguanosine)-(2'-O-methyl-ribonucleoside) in mRNA + S-adenosyl-L-homocysteine + H(+). In terms of biological role, plays a role in virus budding by binding to the cell membrane and gathering the viral RNA into a nucleocapsid that forms the core of a mature virus particle. During virus entry, may induce genome penetration into the host cytoplasm after hemifusion induced by the surface proteins. Can migrate to the cell nucleus where it modulates host functions. Overcomes the anti-viral effects of host EXOC1 by sequestering and degrading the latter through the proteasome degradation pathway. Functionally, inhibits RNA silencing by interfering with host Dicer. Its function is as follows. Prevents premature fusion activity of envelope proteins in trans-Golgi by binding to envelope protein E at pH6.0. After virion release in extracellular space, gets dissociated from E dimers. Acts as a chaperone for envelope protein E during intracellular virion assembly by masking and inactivating envelope protein E fusion peptide. prM is the only viral peptide matured by host furin in the trans-Golgi network probably to avoid catastrophic activation of the viral fusion activity in acidic Golgi compartment prior to virion release. prM-E cleavage is inefficient, and many virions are only partially matured. These uncleaved prM would play a role in immune evasion. In terms of biological role, may play a role in virus budding. Exerts cytotoxic effects by activating a mitochondrial apoptotic pathway through M ectodomain. May display a viroporin activity. Functionally, binds to host cell surface receptor and mediates fusion between viral and cellular membranes. Envelope protein is synthesized in the endoplasmic reticulum in the form of heterodimer with protein prM. They play a role in virion budding in the ER, and the newly formed immature particle is covered with 60 spikes composed of heterodimer between precursor prM and envelope protein E. The virion is transported to the Golgi apparatus where the low pH causes dissociation of PrM-E heterodimers and formation of E homodimers. prM-E cleavage is inefficient, and many virions are only partially matured. These uncleaved prM would play a role in immune evasion. Its function is as follows. Involved in immune evasion, pathogenesis and viral replication. Once cleaved off the polyprotein, is targeted to three destinations: the viral replication cycle, the plasma membrane and the extracellular compartment. Essential for viral replication. Required for formation of the replication complex and recruitment of other non-structural proteins to the ER-derived membrane structures. Excreted as a hexameric lipoparticle that plays a role against host immune response. Antagonizing the complement function. Binds to the host macrophages and dendritic cells. Inhibits signal transduction originating from Toll-like receptor 3 (TLR3). Component of the viral RNA replication complex that functions in virion assembly and antagonizes the host alpha/beta interferon antiviral response. In terms of biological role, required cofactor for the serine protease function of NS3. May have membrane-destabilizing activity and form viroporins. Functionally, displays three enzymatic activities: serine protease, NTPase and RNA helicase. NS3 serine protease, in association with NS2B, performs its autocleavage and cleaves the polyprotein at dibasic sites in the cytoplasm: C-prM, NS2A-NS2B, NS2B-NS3, NS3-NS4A, NS4A-2K and NS4B-NS5. NS3 RNA helicase binds RNA and unwinds dsRNA in the 3' to 5' direction. Its function is as follows. Regulates the ATPase activity of the NS3 helicase activity. NS4A allows NS3 helicase to conserve energy during unwinding. Functions as a signal peptide for NS4B and is required for the interferon antagonism activity of the latter. In terms of biological role, induces the formation of ER-derived membrane vesicles where the viral replication takes place. Inhibits interferon (IFN)-induced host STAT1 phosphorylation and nuclear translocation, thereby preventing the establishment of cellular antiviral state by blocking the IFN-alpha/beta pathway. Inhibits STAT2 translocation in the nucleus after IFN-alpha treatment. Functionally, replicates the viral (+) and (-) RNA genome, and performs the capping of genomes in the cytoplasm. NS5 methylates viral RNA cap at guanine N-7 and ribose 2'-O positions. Besides its role in RNA genome replication, also prevents the establishment of cellular antiviral state by blocking the interferon-alpha/beta (IFN-alpha/beta) signaling pathway. Inhibits host TYK2 and STAT2 phosphorylation, thereby preventing activation of JAK-STAT signaling pathway. The sequence is that of Genome polyprotein from Usutu virus (USUV).